The following is an 817-amino-acid chain: Probable inorganic carbon transporter subunit DabA (817 aa).

4 residues coordinate Zn(2+): C301, D303, H491, and C506. Disordered regions lie at residues 598–617 and 794–817; these read NTSV…ERRA and GWHA…GVPS.

This sequence belongs to the inorganic carbon transporter (TC 9.A.2) DabA family. Forms a complex with DabB. The cofactor is Zn(2+).

It localises to the cell inner membrane. Functionally, part of an energy-coupled inorganic carbon pump. The polypeptide is Probable inorganic carbon transporter subunit DabA (Salinibacter ruber (strain DSM 13855 / M31)).